A 419-amino-acid chain; its full sequence is Tyrosine--tRNA ligase (419 aa).

Tyr34 lines the L-tyrosine pocket. A 'HIGH' region motif is present at residues 39-48; the sequence is PSGDSMHIGH. Residues Tyr168 and Gln172 each coordinate L-tyrosine. Residues 230 to 234 carry the 'KMSKS' region motif; it reads KFGKS. Lys233 provides a ligand contact to ATP. The region spanning 352 to 418 is the S4 RNA-binding domain; the sequence is ANLVDWLVTL…GKKKYFLVSY (67 aa).

This sequence belongs to the class-I aminoacyl-tRNA synthetase family. TyrS type 1 subfamily. Homodimer.

Its subcellular location is the cytoplasm. It catalyses the reaction tRNA(Tyr) + L-tyrosine + ATP = L-tyrosyl-tRNA(Tyr) + AMP + diphosphate + H(+). Its function is as follows. Catalyzes the attachment of tyrosine to tRNA(Tyr) in a two-step reaction: tyrosine is first activated by ATP to form Tyr-AMP and then transferred to the acceptor end of tRNA(Tyr). This Listeria monocytogenes serotype 4b (strain CLIP80459) protein is Tyrosine--tRNA ligase.